Consider the following 180-residue polypeptide: Nucleoside-triphosphatase THEP1 (180 aa).

Residues 8 to 15 (GPVGSIKA) and 100 to 107 (VIIIDELG) contribute to the ATP site.

This sequence belongs to the THEP1 NTPase family.

It carries out the reaction a ribonucleoside 5'-triphosphate + H2O = a ribonucleoside 5'-diphosphate + phosphate + H(+). Functionally, has nucleotide phosphatase activity towards ATP, GTP, CTP, TTP and UTP. May hydrolyze nucleoside diphosphates with lower efficiency. In Picrophilus torridus (strain ATCC 700027 / DSM 9790 / JCM 10055 / NBRC 100828 / KAW 2/3), this protein is Nucleoside-triphosphatase THEP1.